Consider the following 625-residue polypeptide: Basic helix-loop-helix ARNT-like protein 1 (625 aa).

Positions 1 to 60 (MADQRMDISSTISDFMSPGPTDLLSSSLGTSGVDCNRKRKGSSTDYQESMDTDKDDPHGR) are disordered. Ser-17 carries the post-translational modification Phosphoserine; by GSK3-beta. Over residues 17–32 (SPGPTDLLSSSLGTSG) the composition is skewed to low complexity. Thr-21 is subject to Phosphothreonine; by GSK3-beta. Positions 36–41 (NRKRKG) match the Nuclear localization signal motif. Positions 51–60 (DTDKDDPHGR) are enriched in basic and acidic residues. The region spanning 72–125 (NAREAHSQIEKRRRDKMNSFIDELASLVPTCNAMSRKLDKLTVLRMAVQHMKTL) is the bHLH domain. Ser-78 carries the post-translational modification Phosphoserine. A Phosphoserine; by CK2 modification is found at Ser-90. Residues 142-152 (LSDDELKHLIL) carry the Nuclear export signal 1 motif. A PAS 1 domain is found at 143–215 (SDDELKHLIL…EQLSSSDTAP (73 aa)). A Glycyl lysine isopeptide (Lys-Gly) (interchain with G-Cter in SUMO2 and SUMO3) cross-link involves residue Lys-252. A Glycyl lysine isopeptide (Lys-Gly) (interchain with G-Cter in SUMO); alternate cross-link involves residue Lys-259. Lys-259 participates in a covalent cross-link: Glycyl lysine isopeptide (Lys-Gly) (interchain with G-Cter in SUMO2); alternate. One can recognise a PAS 2 domain in the interval 325-395 (PQPVNGEIRV…ECHRQVLQTR (71 aa)). The Nuclear export signal 2 signature appears at 360 to 368 (LAYLPQELL). The PAC domain maps to 400-443 (TNCYKFKIKDGSFITLRSRWFSFMNPWTKEVEYIVSTNTVVLAN). 2 disordered regions span residues 454–491 (QLTA…RAGA) and 510–594 (GSSP…SPSN). The interaction with CIART stretch occupies residues 507–587 (RIRGSSPSSC…IGIDMIDNDQ (81 aa)). The segment covering 510 to 520 (GSSPSSCGSSP) has biased composition (low complexity). Lys-537 bears the N6-acetyllysine mark.

As to quaternary structure, component of the circadian clock oscillator which includes the CRY1/2 proteins, CLOCK or NPAS2, BMAL1 or BMAL2, CSNK1D and/or CSNK1E, TIMELESS and the PER1/2/3 proteins. Forms a heterodimer with CLOCK. The CLOCK-BMAL1 heterodimer is required for E-box-dependent transactivation, for CLOCK nuclear translocation and degradation, and, for phosphorylation of both CLOCK and BMAL1. Part of a nuclear complex which also includes RACK1 and PRKCA; RACK1 and PRKCA are recruited to the complex in a circadian manner. Interacts with NPAS2. Interacts with EZH2. Interacts with SUMO3. Interacts with SIRT1. Interacts with AHR. Interacts with ID1, ID2 and ID3. Interacts with DDX4. Interacts with OGT. Interacts with EED and SUZ12. Interacts with MTA1. Interacts with CIART. Interacts with HSP90. Interacts with KAT2B and EP300. Interacts with BHLHE40/DEC1 and BHLHE41/DEC2. Interacts with RELB and the interaction is enhanced in the presence of CLOCK. Interacts with PER1, PER2, CRY1 and CRY2 and this interaction requires a translocation to the nucleus. Interaction of the CLOCK-BMAL1 heterodimer with PER or CRY inhibits transcription activation. Interaction of the CLOCK-BMAL1 with CRY1 is independent of DNA but with PER2 is off DNA. The CLOCK-BMAL1 heterodimer interacts with GSK3B. Interacts with KDM5A. Interacts with KMT2A; in a circadian manner. Interacts with UBE3A. Interacts with PRKCG. Interacts with MAGEL2. Interacts with NCOA2. Interacts with THRAP3. The CLOCK-BMAL1 heterodimer interacts with PASD1. Interacts with PASD1. Interacts with USP9X. Interacts with PIWIL2 (via PIWI domain). Interacts with HDAC3. Interacts with HNF4A. Ubiquitinated, leading to its proteasomal degradation. Deubiquitinated by USP9X. In terms of processing, O-glycosylated; contains O-GlcNAc. O-glycosylation by OGT prevents protein degradation by inhibiting ubiquitination. It also stabilizes the CLOCK-BMAL1 heterodimer thereby increasing CLOCK-BMAL1-mediated transcription of genes in the negative loop of the circadian clock such as PER1/2/3 and CRY1/2. Post-translationally, acetylated on Lys-537 by CLOCK during the repression phase of the circadian cycle. Acetylation facilitates recruitment of CRY1 protein and initiates the repression phase of the circadian cycle. Acetylated at Lys-537 by KAT5 during the activation phase of the cycle, leading to recruitment of the positive transcription elongation factor b (P-TEFb) and BRD4, followed by productive elongation of circadian transcripts. Deacetylated by SIRT1, which may result in decreased protein stability. Phosphorylated upon dimerization with CLOCK. Phosphorylation enhances the transcriptional activity, alters the subcellular localization and decreases the stability of the CLOCK-BMAL1 heterodimer by promoting its degradation. Phosphorylation shows circadian variations in the liver with a peak between CT10 to CT14. Phosphorylation at Ser-90 by CK2 is essential for its nuclear localization, its interaction with CLOCK and controls CLOCK nuclear entry. Dephosphorylation at Ser-78 is important for dimerization with CLOCK and transcriptional activity. In terms of processing, sumoylated on Lys-259 upon dimerization with CLOCK. Predominantly conjugated to poly-SUMO2/3 rather than SUMO1 and the level of these conjugates undergo rhythmic variation, peaking at CT9-CT12. Sumoylation localizes it exclusively to the PML body and promotes its ubiquitination in the PML body, ubiquitin-dependent proteasomal degradation and the transcriptional activity of the CLOCK-BMAL1 heterodimer. Post-translationally, undergoes lysosome-mediated degradation in a time-dependent manner in the liver.

The protein resides in the nucleus. Its subcellular location is the cytoplasm. It localises to the PML body. In terms of biological role, transcriptional activator which forms a core component of the circadian clock. The circadian clock, an internal time-keeping system, regulates various physiological processes through the generation of approximately 24 hour circadian rhythms in gene expression, which are translated into rhythms in metabolism and behavior. It is derived from the Latin roots 'circa' (about) and 'diem' (day) and acts as an important regulator of a wide array of physiological functions including metabolism, sleep, body temperature, blood pressure, endocrine, immune, cardiovascular, and renal function. Consists of two major components: the central clock, residing in the suprachiasmatic nucleus (SCN) of the brain, and the peripheral clocks that are present in nearly every tissue and organ system. Both the central and peripheral clocks can be reset by environmental cues, also known as Zeitgebers (German for 'timegivers'). The predominant Zeitgeber for the central clock is light, which is sensed by retina and signals directly to the SCN. The central clock entrains the peripheral clocks through neuronal and hormonal signals, body temperature and feeding-related cues, aligning all clocks with the external light/dark cycle. Circadian rhythms allow an organism to achieve temporal homeostasis with its environment at the molecular level by regulating gene expression to create a peak of protein expression once every 24 hours to control when a particular physiological process is most active with respect to the solar day. Transcription and translation of core clock components (CLOCK, NPAS2, BMAL1, BMAL2, PER1, PER2, PER3, CRY1 and CRY2) plays a critical role in rhythm generation, whereas delays imposed by post-translational modifications (PTMs) are important for determining the period (tau) of the rhythms (tau refers to the period of a rhythm and is the length, in time, of one complete cycle). A diurnal rhythm is synchronized with the day/night cycle, while the ultradian and infradian rhythms have a period shorter and longer than 24 hours, respectively. Disruptions in the circadian rhythms contribute to the pathology of cardiovascular diseases, cancer, metabolic syndromes and aging. A transcription/translation feedback loop (TTFL) forms the core of the molecular circadian clock mechanism. Transcription factors, CLOCK or NPAS2 and BMAL1 or BMAL2, form the positive limb of the feedback loop, act in the form of a heterodimer and activate the transcription of core clock genes and clock-controlled genes (involved in key metabolic processes), harboring E-box elements (5'-CACGTG-3') within their promoters. The core clock genes: PER1/2/3 and CRY1/2 which are transcriptional repressors form the negative limb of the feedback loop and interact with the CLOCK|NPAS2-BMAL1|BMAL2 heterodimer inhibiting its activity and thereby negatively regulating their own expression. This heterodimer also activates nuclear receptors NR1D1/2 and RORA/B/G, which form a second feedback loop and which activate and repress BMAL1 transcription, respectively. BMAL1 positively regulates myogenesis and negatively regulates adipogenesis via the transcriptional control of the genes of the canonical Wnt signaling pathway. Plays a role in normal pancreatic beta-cell function; regulates glucose-stimulated insulin secretion via the regulation of antioxidant genes NFE2L2/NRF2 and its targets SESN2, PRDX3, CCLC and CCLM. Negatively regulates the mTORC1 signaling pathway; regulates the expression of MTOR and DEPTOR. Controls diurnal oscillations of Ly6C inflammatory monocytes; rhythmic recruitment of the PRC2 complex imparts diurnal variation to chemokine expression that is necessary to sustain Ly6C monocyte rhythms. Regulates the expression of HSD3B2, STAR, PTGS2, CYP11A1, CYP19A1 and LHCGR in the ovary and also the genes involved in hair growth. Plays an important role in adult hippocampal neurogenesis by regulating the timely entry of neural stem/progenitor cells (NSPCs) into the cell cycle and the number of cell divisions that take place prior to cell-cycle exit. Regulates the circadian expression of CIART and KLF11. The CLOCK-BMAL1 heterodimer regulates the circadian expression of SERPINE1/PAI1, VWF, B3, CCRN4L/NOC, NAMPT, DBP, MYOD1, PPARGC1A, PPARGC1B, SIRT1, GYS2, F7, NGFR, GNRHR, BHLHE40/DEC1, ATF4, MTA1, KLF10 and also genes implicated in glucose and lipid metabolism. Promotes rhythmic chromatin opening, regulating the DNA accessibility of other transcription factors. The NPAS2-BMAL1 heterodimer positively regulates the expression of MAOA, F7 and LDHA and modulates the circadian rhythm of daytime contrast sensitivity by regulating the rhythmic expression of adenylate cyclase type 1 (ADCY1) in the retina. The preferred binding motif for the CLOCK-BMAL1 heterodimer is 5'-CACGTGA-3', which contains a flanking adenine nucleotide at the 3-prime end of the canonical 6-nucleotide E-box sequence. CLOCK specifically binds to the half-site 5'-CAC-3', while BMAL1 binds to the half-site 5'-GTGA-3'. The CLOCK-BMAL1 heterodimer also recognizes the non-canonical E-box motifs 5'-AACGTGA-3' and 5'-CATGTGA-3'. Essential for the rhythmic interaction of CLOCK with ASS1 and plays a critical role in positively regulating CLOCK-mediated acetylation of ASS1. Plays a role in protecting against lethal sepsis by limiting the expression of immune checkpoint protein CD274 in macrophages in a PKM2-dependent manner. Regulates the diurnal rhythms of skeletal muscle metabolism via transcriptional activation of genes promoting triglyceride synthesis (DGAT2) and metabolic efficiency (COQ10B). This chain is Basic helix-loop-helix ARNT-like protein 1 (BMAL1), found in Pongo abelii (Sumatran orangutan).